The chain runs to 352 residues: UDP-N-acetylglucosamine--N-acetylmuramyl-(pentapeptide) pyrophosphoryl-undecaprenol N-acetylglucosamine transferase (352 aa).

Residues Ser-195 and Gln-287 each coordinate UDP-N-acetyl-alpha-D-glucosamine.

Belongs to the glycosyltransferase 28 family. MurG subfamily.

Its subcellular location is the cell membrane. It carries out the reaction Mur2Ac(oyl-L-Ala-gamma-D-Glu-L-Lys-D-Ala-D-Ala)-di-trans,octa-cis-undecaprenyl diphosphate + UDP-N-acetyl-alpha-D-glucosamine = beta-D-GlcNAc-(1-&gt;4)-Mur2Ac(oyl-L-Ala-gamma-D-Glu-L-Lys-D-Ala-D-Ala)-di-trans,octa-cis-undecaprenyl diphosphate + UDP + H(+). Its pathway is cell wall biogenesis; peptidoglycan biosynthesis. Functionally, cell wall formation. Catalyzes the transfer of a GlcNAc subunit on undecaprenyl-pyrophosphoryl-MurNAc-pentapeptide (lipid intermediate I) to form undecaprenyl-pyrophosphoryl-MurNAc-(pentapeptide)GlcNAc (lipid intermediate II). This Streptococcus pneumoniae (strain Hungary19A-6) protein is UDP-N-acetylglucosamine--N-acetylmuramyl-(pentapeptide) pyrophosphoryl-undecaprenol N-acetylglucosamine transferase.